Reading from the N-terminus, the 372-residue chain is Alanine racemase (372 aa).

Catalysis depends on lysine 41, which acts as the Proton acceptor; specific for D-alanine. Lysine 41 is subject to N6-(pyridoxal phosphate)lysine. Residue arginine 139 coordinates substrate. Tyrosine 268 (proton acceptor; specific for L-alanine) is an active-site residue. Position 316 (methionine 316) interacts with substrate.

It belongs to the alanine racemase family. Requires pyridoxal 5'-phosphate as cofactor.

The catalysed reaction is L-alanine = D-alanine. The protein operates within amino-acid biosynthesis; D-alanine biosynthesis; D-alanine from L-alanine: step 1/1. Catalyzes the interconversion of L-alanine and D-alanine. May also act on other amino acids. The protein is Alanine racemase (alr) of Borreliella burgdorferi (strain ATCC 35210 / DSM 4680 / CIP 102532 / B31) (Borrelia burgdorferi).